Consider the following 94-residue polypeptide: Pyrimidine/purine nucleoside phosphorylase (94 aa).

Belongs to the nucleoside phosphorylase PpnP family.

The catalysed reaction is a purine D-ribonucleoside + phosphate = a purine nucleobase + alpha-D-ribose 1-phosphate. The enzyme catalyses adenosine + phosphate = alpha-D-ribose 1-phosphate + adenine. It carries out the reaction cytidine + phosphate = cytosine + alpha-D-ribose 1-phosphate. It catalyses the reaction guanosine + phosphate = alpha-D-ribose 1-phosphate + guanine. The catalysed reaction is inosine + phosphate = alpha-D-ribose 1-phosphate + hypoxanthine. The enzyme catalyses thymidine + phosphate = 2-deoxy-alpha-D-ribose 1-phosphate + thymine. It carries out the reaction uridine + phosphate = alpha-D-ribose 1-phosphate + uracil. It catalyses the reaction xanthosine + phosphate = alpha-D-ribose 1-phosphate + xanthine. Its function is as follows. Catalyzes the phosphorolysis of diverse nucleosides, yielding D-ribose 1-phosphate and the respective free bases. Can use uridine, adenosine, guanosine, cytidine, thymidine, inosine and xanthosine as substrates. Also catalyzes the reverse reactions. In Psychromonas ingrahamii (strain DSM 17664 / CCUG 51855 / 37), this protein is Pyrimidine/purine nucleoside phosphorylase.